A 385-amino-acid polypeptide reads, in one-letter code: 1-deoxy-D-xylulose 5-phosphate reductoisomerase 1 (385 aa).

Positions 11, 12, 13, 14, 39, and 122 each coordinate NADPH. K123 contacts 1-deoxy-D-xylulose 5-phosphate. Residue E124 coordinates NADPH. Position 148 (D148) interacts with Mn(2+). 1-deoxy-D-xylulose 5-phosphate contacts are provided by S149, E150, S174, and H197. Residue E150 participates in Mn(2+) binding. G203 contributes to the NADPH binding site. Residues S210, N215, K216, and E219 each contribute to the 1-deoxy-D-xylulose 5-phosphate site. A Mn(2+)-binding site is contributed by E219.

It belongs to the DXR family. Requires Mg(2+) as cofactor. The cofactor is Mn(2+).

It catalyses the reaction 2-C-methyl-D-erythritol 4-phosphate + NADP(+) = 1-deoxy-D-xylulose 5-phosphate + NADPH + H(+). The protein operates within isoprenoid biosynthesis; isopentenyl diphosphate biosynthesis via DXP pathway; isopentenyl diphosphate from 1-deoxy-D-xylulose 5-phosphate: step 1/6. In terms of biological role, catalyzes the NADPH-dependent rearrangement and reduction of 1-deoxy-D-xylulose-5-phosphate (DXP) to 2-C-methyl-D-erythritol 4-phosphate (MEP). This is 1-deoxy-D-xylulose 5-phosphate reductoisomerase 1 from Bacillus cereus (strain ATCC 14579 / DSM 31 / CCUG 7414 / JCM 2152 / NBRC 15305 / NCIMB 9373 / NCTC 2599 / NRRL B-3711).